Reading from the N-terminus, the 293-residue chain is Sphingolipid C4-hydroxylase sur2 (293 aa).

3 consecutive transmembrane segments (helical) span residues Leu-18–Ile-38, Ala-68–Gly-88, and Phe-127–Phe-147. The Fatty acid hydroxylase domain occupies Phe-136–Thr-270.

It belongs to the sterol desaturase family.

Its subcellular location is the endoplasmic reticulum membrane. The protein operates within membrane lipid metabolism; sphingolipid biosynthesis. In terms of biological role, required for hydroxylation of C-4 in the sphingoid moiety of ceramide. Involved in the response to syringomycin. This Schizosaccharomyces pombe (strain 972 / ATCC 24843) (Fission yeast) protein is Sphingolipid C4-hydroxylase sur2 (sur2).